The sequence spans 163 residues: Nucleotide-binding protein BCG9842_B4128 (163 aa).

It belongs to the YajQ family.

Nucleotide-binding protein. The polypeptide is Nucleotide-binding protein BCG9842_B4128 (Bacillus cereus (strain G9842)).